Reading from the N-terminus, the 444-residue chain is Methylenetetrahydrofolate--tRNA-(uracil-5-)-methyltransferase TrmFO (444 aa).

10 to 15 serves as a coordination point for FAD; it reads GAGLAG.

The protein belongs to the MnmG family. TrmFO subfamily. Requires FAD as cofactor.

It localises to the cytoplasm. It carries out the reaction uridine(54) in tRNA + (6R)-5,10-methylene-5,6,7,8-tetrahydrofolate + NADH + H(+) = 5-methyluridine(54) in tRNA + (6S)-5,6,7,8-tetrahydrofolate + NAD(+). The enzyme catalyses uridine(54) in tRNA + (6R)-5,10-methylene-5,6,7,8-tetrahydrofolate + NADPH + H(+) = 5-methyluridine(54) in tRNA + (6S)-5,6,7,8-tetrahydrofolate + NADP(+). Its function is as follows. Catalyzes the folate-dependent formation of 5-methyl-uridine at position 54 (M-5-U54) in all tRNAs. The protein is Methylenetetrahydrofolate--tRNA-(uracil-5-)-methyltransferase TrmFO of Streptococcus pneumoniae (strain ATCC 700669 / Spain 23F-1).